Reading from the N-terminus, the 2099-residue chain is Dedicator of cytokinesis protein 8 (2099 aa).

Phosphoserine occurs at positions 20, 139, and 451. The C2 DOCK-type domain maps to 560-729 (RNLLYVYPQR…GVFNIEVQAV (170 aa)). Phosphoserine occurs at positions 904, 936, 1145, and 1243. A DOCKER domain is found at 1632–2066 (KSYQASPDLR…LRPMIERKIP (435 aa)). Phosphoserine is present on serine 2087.

Belongs to the DOCK family. As to quaternary structure, interacts (via DOCKER domain) with GTPase CDC42; the interaction activates CDC42 by exchanging GDP for GTP. The unphosphorylated form interacts (via DOCKER domain) with LRCH1 (via LRR repeats); the interaction prevents the association between DOCK8 and CDC42. Interacts with CCDC88B. Post-translationally, in response to chemokine CXCL12/SDF-1-alpha stimulation, phosphorylated by PRKCA/PKC-alpha which promotes DOCK8 dissociation from LRCH1. In terms of tissue distribution, expressed in peripheral blood mononuclear cells (PBMCs).

The protein localises to the cytoplasm. The protein resides in the cell membrane. Its subcellular location is the cell projection. It localises to the lamellipodium membrane. Functionally, guanine nucleotide exchange factor (GEF) which specifically activates small GTPase CDC42 by exchanging bound GDP for free GTP. During immune responses, required for interstitial dendritic cell (DC) migration by locally activating CDC42 at the leading edge membrane of DC. Required for CD4(+) T-cell migration in response to chemokine stimulation by promoting CDC42 activation at T cell leading edge membrane. Is involved in NK cell cytotoxicity by controlling polarization of microtubule-organizing center (MTOC), and possibly regulating CCDC88B-mediated lytic granule transport to MTOC during cell killing. This is Dedicator of cytokinesis protein 8 (DOCK8) from Homo sapiens (Human).